A 363-amino-acid polypeptide reads, in one-letter code: Protein Wnt-5 (363 aa).

An N-terminal signal peptide occupies residues 1-27 (MVGMTRIQSAEPVWILFVLTLYSSVLM). N48 and N98 each carry an N-linked (GlcNAc...) asparagine glycan. 11 cysteine pairs are disulfide-bonded: C88/C99, C137/C145, C147/C165, C221/C235, C223/C230, C292/C323, C308/C318, C322/C362, C338/C353, C340/C350, and C345/C346. The O-palmitoleoyl serine; by PORCN moiety is linked to residue S227.

The protein belongs to the Wnt family. Post-translationally, palmitoleoylation is required for efficient binding to frizzled receptors. Depalmitoleoylation leads to Wnt signaling pathway inhibition.

The protein resides in the secreted. It is found in the extracellular space. The protein localises to the extracellular matrix. Ligand for members of the frizzled family of seven transmembrane receptors. Probable developmental protein. May be a signaling molecule which affects the development of discrete regions of tissues. Is likely to signal over only few cell diameters. The chain is Protein Wnt-5 (WNT5) from Halocynthia roretzi (Sea squirt).